The primary structure comprises 502 residues: ATP synthase subunit alpha (502 aa).

An ATP-binding site is contributed by 169–176; that stretch reads GDRQTGKT.

This sequence belongs to the ATPase alpha/beta chains family. F-type ATPases have 2 components, CF(1) - the catalytic core - and CF(0) - the membrane proton channel. CF(1) has five subunits: alpha(3), beta(3), gamma(1), delta(1), epsilon(1). CF(0) has three main subunits: a(1), b(2) and c(9-12). The alpha and beta chains form an alternating ring which encloses part of the gamma chain. CF(1) is attached to CF(0) by a central stalk formed by the gamma and epsilon chains, while a peripheral stalk is formed by the delta and b chains.

Its subcellular location is the cell membrane. It carries out the reaction ATP + H2O + 4 H(+)(in) = ADP + phosphate + 5 H(+)(out). Its function is as follows. Produces ATP from ADP in the presence of a proton gradient across the membrane. The alpha chain is a regulatory subunit. The protein is ATP synthase subunit alpha of Priestia megaterium (strain ATCC 12872 / QMB1551) (Bacillus megaterium).